Here is a 185-residue protein sequence, read N- to C-terminus: Pre-histone-like nucleoprotein (185 aa).

Residue S2 is modified to N-acetylserine; by host. The propeptide occupies 2–23 (SILISPDNNTGWGLCSAGMYGG). Position 55 is a phosphothreonine; by host (T55). Residue S172 is modified to Phosphoserine; by host. A Nuclear localization signal motif is present at residues 175–185 (RVPVRSRPPRS).

It belongs to the adenoviridae histone-like nucleoprotein family. In terms of assembly, interacts with the core-capsid bridging protein; this interaction bridges the virus core to the capsid. Interacts with host NPM1; this interaction might play a role in placing the pre-histone-like nucleoprotein on the viral DNA or regulating viral gene expression. Interacts with host HMGB1; this interaction inhibits host immune response. In terms of processing, cleaved near the N-terminus by the viral protease during virion maturation to form the mature protein.

It is found in the virion. Its subcellular location is the host nucleus. The protein resides in the host nucleolus. Functionally, plays a role in the inhibition of host immune response within the nucleus. Interacts with cellular nucleosomes and immobilizes the host immune danger signal HMGB1 on chromatin. In turn, prevents HMGB1 release out of the cell and thus decreases inflammation. Also plays a role in the wrapping and condensation of the viral DNA. May also promote viral genome import into the nucleus. This chain is Pre-histone-like nucleoprotein, found in Human adenovirus F serotype 40 (HAdV-40).